The chain runs to 202 residues: V-type proton ATPase subunit E (202 aa).

The protein belongs to the V-ATPase E subunit family.

In terms of biological role, produces ATP from ADP in the presence of a proton gradient across the membrane. This is V-type proton ATPase subunit E from Halothermothrix orenii (strain H 168 / OCM 544 / DSM 9562).